A 520-amino-acid chain; its full sequence is MTQTAHPDSVLIIDFGSQVTQLIARRVRETGVYCEIVPFQSSEEGFARLKPKAVILSGSPASALDEGSPRVPQVIFDSGLPIFGICYGQQTICAQLGGKVEAGHHREFGRAFLEIEQDCKLFEGLWSVGSRHQVWMSHGDRVTAIPPGFRVLATSSNAPFAFIADEARKYYAVQFHPEVVHTPDGAKLIQNFVHNIAGITGDWSMSAYRAKAVEQIRAQVGDKRVICALSGGVDSSVAALLIHEAVGDQLTCILVDHGLMRKNEAADVVAMFKEHYNLHLIHVDAIDRFVGELEGVSDPETKRKIIGRLFIETFEEEAKKLGGADFLGQGTLYPDVIESVSFSGGPSVTIKSHHNVGGLPDRMNMKLVEPLRELFKDEVRVLGKELGLPDSFIGRHPFPGPGLAIRCPGGVTREKLDILREADAIYLDEIRKAGLYDAIWQAFAVLLPVQTVGVMGDGRTYEFVCALRAVTSVDGMTADFYHYDMEFLGRAATRIINEVRGINRVVYDVTSKPPGTIEWE.

The Glutamine amidotransferase type-1 domain maps to 9–202 (SVLIIDFGSQ…VHNIAGITGD (194 aa)). The active-site Nucleophile is the cysteine 86. Residues histidine 176 and glutamate 178 contribute to the active site. A GMPS ATP-PPase domain is found at 203-395 (WSMSAYRAKA…LGLPDSFIGR (193 aa)). 230–236 (SGGVDSS) is an ATP binding site.

As to quaternary structure, homodimer.

The enzyme catalyses XMP + L-glutamine + ATP + H2O = GMP + L-glutamate + AMP + diphosphate + 2 H(+). Its pathway is purine metabolism; GMP biosynthesis; GMP from XMP (L-Gln route): step 1/1. In terms of biological role, catalyzes the synthesis of GMP from XMP. The polypeptide is GMP synthase [glutamine-hydrolyzing] (Allorhizobium ampelinum (strain ATCC BAA-846 / DSM 112012 / S4) (Agrobacterium vitis (strain S4))).